A 175-amino-acid polypeptide reads, in one-letter code: Translation initiation factor IF-3 (175 aa).

It belongs to the IF-3 family. Monomer.

It is found in the cytoplasm. Its function is as follows. IF-3 binds to the 30S ribosomal subunit and shifts the equilibrium between 70S ribosomes and their 50S and 30S subunits in favor of the free subunits, thus enhancing the availability of 30S subunits on which protein synthesis initiation begins. The polypeptide is Translation initiation factor IF-3 (Staphylococcus aureus (strain NCTC 8325 / PS 47)).